The primary structure comprises 359 residues: RNA-binding protein 4B (359 aa).

2 RRM domains span residues 2–72 and 78–148; these read VKLF…ASKN and TKLH…LSTS. The CCHC-type zinc-finger motif lies at 160-177; that stretch reads SGCYRCGKEGHWSKECPV. Positions 196-359 are interaction with TNPO3; it reads AVRPPYTMGY…YVDRARYSAF (164 aa).

Interacts with TNPO3, which may mediate nuclear import of the protein.

It is found in the nucleus. The protein resides in the nucleolus. Required for the translational activation of PER1 mRNA in response to circadian clock. Binds directly to the 3'-UTR of the PER1 mRNA. This chain is RNA-binding protein 4B (RBM4B), found in Sus scrofa (Pig).